Here is a 615-residue protein sequence, read N- to C-terminus: MFS-type transporter 1 (615 aa).

The disordered stretch occupies residues 1–85 (MTALAAVPDL…GNNVSPHGRH (85 aa)). Residues 16–53 (PSTTTVHSPNYSGSPADISSSPTTRAVSRNTARQTASA) show a composition bias toward polar residues. N25 carries N-linked (GlcNAc...) asparagine glycosylation. The next 6 helical transmembrane spans lie at 94-114 (CLVI…SGIL), 138-158 (VYSL…HIIG), 162-182 (VWIT…RSAT), 192-212 (VLGV…TNGF), 222-242 (FAFQ…LGGI), and 251-271 (FGFY…LVVL). N-linked (GlcNAc...) asparagine glycosylation occurs at N302. 8 consecutive transmembrane segments (helical) span residues 320–340 (WTGT…FSVV), 351–371 (QNIA…LWVG), 397–417 (AAVF…ALYF), 432–452 (FLPM…LVET), 455–475 (VRWL…IMAL), 488–508 (FAML…NLII), 522–542 (AVFN…TAVV), and 585–605 (AAFW…FLGL).

This sequence belongs to the major facilitator superfamily. EmrB family.

It is found in the membrane. Functionally, MFS-type transporter; part of the gene cluster that mediates the biosynthesis of pyriculol and pyriculariol, two heptaketides that induce lesion formation upon application on rice leaves but are dispensable for pathogenicity. With the ABC transporter ABC7, is most likely responsible for pyriculol and pyriculariol secretion and thereby may contribute to intrinsic resistance. The polypeptide is MFS-type transporter 1 (Pyricularia oryzae (strain 70-15 / ATCC MYA-4617 / FGSC 8958) (Rice blast fungus)).